Reading from the N-terminus, the 1040-residue chain is Multidrug resistance protein MdtB (1040 aa).

The next 11 membrane-spanning stretches (helical) occupy residues Leu15–Gly37, Phe345–Leu362, Ala367–Leu389, Leu396–Asn418, Gly438–Phe460, Phe472–Met494, His535–Ile557, Val867–Ile889, Leu909–Val931, Ile968–Thr990, and Met1000–Phe1022.

Belongs to the resistance-nodulation-cell division (RND) (TC 2.A.6) family. MdtB subfamily. As to quaternary structure, part of a tripartite efflux system composed of MdtA, MdtB and MdtC. MdtB forms a heteromultimer with MdtC.

It is found in the cell inner membrane. The chain is Multidrug resistance protein MdtB from Salmonella typhimurium (strain LT2 / SGSC1412 / ATCC 700720).